Here is a 242-residue protein sequence, read N- to C-terminus: Biosynthetic peptidoglycan transglycosylase (242 aa).

A helical membrane pass occupies residues 19 to 39; it reads ILVVLAVFWGGGIALFSVVPV.

Belongs to the glycosyltransferase 51 family.

It localises to the cell inner membrane. It carries out the reaction [GlcNAc-(1-&gt;4)-Mur2Ac(oyl-L-Ala-gamma-D-Glu-L-Lys-D-Ala-D-Ala)](n)-di-trans,octa-cis-undecaprenyl diphosphate + beta-D-GlcNAc-(1-&gt;4)-Mur2Ac(oyl-L-Ala-gamma-D-Glu-L-Lys-D-Ala-D-Ala)-di-trans,octa-cis-undecaprenyl diphosphate = [GlcNAc-(1-&gt;4)-Mur2Ac(oyl-L-Ala-gamma-D-Glu-L-Lys-D-Ala-D-Ala)](n+1)-di-trans,octa-cis-undecaprenyl diphosphate + di-trans,octa-cis-undecaprenyl diphosphate + H(+). The protein operates within cell wall biogenesis; peptidoglycan biosynthesis. In terms of biological role, peptidoglycan polymerase that catalyzes glycan chain elongation from lipid-linked precursors. In Citrobacter koseri (strain ATCC BAA-895 / CDC 4225-83 / SGSC4696), this protein is Biosynthetic peptidoglycan transglycosylase.